We begin with the raw amino-acid sequence, 654 residues long: tRNA 5-methylaminomethyl-2-thiouridine biosynthesis bifunctional protein MnmC (654 aa).

A tRNA (mnm(5)s(2)U34)-methyltransferase region spans residues 1 to 236 (MTDRIVPATL…KRAMLVGEFA (236 aa)). Residues 260-654 (IGAGLAGCAA…IRALRRGRVA (395 aa)) form an FAD-dependent cmnm(5)s(2)U34 oxidoreductase region.

The protein in the N-terminal section; belongs to the methyltransferase superfamily. tRNA (mnm(5)s(2)U34)-methyltransferase family. It in the C-terminal section; belongs to the DAO family. FAD serves as cofactor.

The protein localises to the cytoplasm. The catalysed reaction is 5-aminomethyl-2-thiouridine(34) in tRNA + S-adenosyl-L-methionine = 5-methylaminomethyl-2-thiouridine(34) in tRNA + S-adenosyl-L-homocysteine + H(+). Catalyzes the last two steps in the biosynthesis of 5-methylaminomethyl-2-thiouridine (mnm(5)s(2)U) at the wobble position (U34) in tRNA. Catalyzes the FAD-dependent demodification of cmnm(5)s(2)U34 to nm(5)s(2)U34, followed by the transfer of a methyl group from S-adenosyl-L-methionine to nm(5)s(2)U34, to form mnm(5)s(2)U34. The sequence is that of tRNA 5-methylaminomethyl-2-thiouridine biosynthesis bifunctional protein MnmC from Burkholderia thailandensis (strain ATCC 700388 / DSM 13276 / CCUG 48851 / CIP 106301 / E264).